A 1188-amino-acid chain; its full sequence is DNA-directed RNA polymerase subunit beta (1188 aa).

The protein belongs to the RNA polymerase beta chain family. The RNAP catalytic core consists of 2 alpha, 1 beta, 1 beta' and 1 omega subunit. When a sigma factor is associated with the core the holoenzyme is formed, which can initiate transcription.

The catalysed reaction is RNA(n) + a ribonucleoside 5'-triphosphate = RNA(n+1) + diphosphate. Functionally, DNA-dependent RNA polymerase catalyzes the transcription of DNA into RNA using the four ribonucleoside triphosphates as substrates. The protein is DNA-directed RNA polymerase subunit beta of Streptococcus pyogenes serotype M18 (strain MGAS8232).